The chain runs to 113 residues: uncharacterized protein (113 aa).

A run of 3 helical transmembrane segments spans residues 9-31 (IFPS…SVIY), 36-58 (VLTI…YKFQ), and 71-90 (IMAL…VVAV).

The protein resides in the cell membrane. This is an uncharacterized protein from Archaeoglobus fulgidus (strain ATCC 49558 / DSM 4304 / JCM 9628 / NBRC 100126 / VC-16).